The chain runs to 481 residues: Trichosetin biosynthesis cluster MFS transporter (481 aa).

Positions 1–13 are enriched in polar residues; it reads MSTTPQMSQSGFQ. Positions 1–63 are disordered; that stretch reads MSTTPQMSQS…DGPDDPQHPL (63 aa). A compositionally biased stretch (basic and acidic residues) spans 20–31; that stretch reads GAREDVGTEAQE. N64 carries an N-linked (GlcNAc...) asparagine glycan. Residues 72-92 traverse the membrane as a helical segment; that stretch reads LHVGIVSLSTLAANLAATMFA. N-linked (GlcNAc...) asparagine glycosylation is present at N103. Helical transmembrane passes span 111–131, 147–167, 169–189, 200–220, and 228–248; these read AMTV…LAPL, VYMA…FLVF, IIAG…VADL, ALFA…GGFV, and WTFR…FALM. N252 is a glycosylation site (N-linked (GlcNAc...) asparagine). Transmembrane regions (helical) follow at residues 302 to 322, 353 to 373, 380 to 400, 403 to 423, and 446 to 466; these read PIVL…FLLF, LLLM…YGWT, WIVP…VVIP, IYLV…ANLL, and GWGN…PWIF.

The protein belongs to the major facilitator superfamily.

The protein resides in the cell membrane. Efflux pump required for efficient secretion of trichosetin or other secondary metabolies produced by the trichosetin gene cluster. Plays a crucial role in detoxification of the toxic trichosetin in Gibberella fujikuroi cells. This chain is Trichosetin biosynthesis cluster MFS transporter, found in Gibberella fujikuroi (strain CBS 195.34 / IMI 58289 / NRRL A-6831) (Bakanae and foot rot disease fungus).